Consider the following 387-residue polypeptide: Xylose isomerase (387 aa).

Active-site residues include histidine 54 and aspartate 57. Positions 181, 217, 220, 245, 255, 257, and 287 each coordinate Mg(2+).

Belongs to the xylose isomerase family. Homotetramer. Requires Mg(2+) as cofactor.

The protein localises to the cytoplasm. It carries out the reaction alpha-D-xylose = alpha-D-xylulofuranose. The polypeptide is Xylose isomerase (Streptomyces coelicolor (strain ATCC BAA-471 / A3(2) / M145)).